We begin with the raw amino-acid sequence, 362 residues long: 3-isopropylmalate dehydrogenase (362 aa).

78–91 (GPKWEHLAPNDQPE) contributes to the NAD(+) binding site. The substrate site is built by Arg-99, Arg-109, Arg-138, and Asp-227. Positions 227, 251, and 255 each coordinate Mg(2+). 285 to 297 (GSAPDIAGKNIAN) is a binding site for NAD(+).

The protein belongs to the isocitrate and isopropylmalate dehydrogenases family. LeuB type 1 subfamily. Homodimer. Requires Mg(2+) as cofactor. Mn(2+) serves as cofactor.

The protein localises to the cytoplasm. It carries out the reaction (2R,3S)-3-isopropylmalate + NAD(+) = 4-methyl-2-oxopentanoate + CO2 + NADH. It participates in amino-acid biosynthesis; L-leucine biosynthesis; L-leucine from 3-methyl-2-oxobutanoate: step 3/4. In terms of biological role, catalyzes the oxidation of 3-carboxy-2-hydroxy-4-methylpentanoate (3-isopropylmalate) to 3-carboxy-4-methyl-2-oxopentanoate. The product decarboxylates to 4-methyl-2 oxopentanoate. The polypeptide is 3-isopropylmalate dehydrogenase (Photobacterium profundum (strain SS9)).